Reading from the N-terminus, the 265-residue chain is Mlc titration factor A (265 aa).

Zn(2+) is bound by residues His111, His148, His152, and Glu211.

It belongs to the MtfA family. In terms of assembly, interacts with Mlc. Zn(2+) is required as a cofactor.

The protein resides in the cytoplasm. In terms of biological role, involved in the modulation of the activity of the glucose-phosphotransferase system (glucose-PTS). Interacts with the transcriptional repressor Mlc, preventing its interaction with DNA and leading to the modulation of expression of genes regulated by Mlc, including ptsG, which encodes the PTS system glucose-specific EIICB component. Shows zinc-dependent metallopeptidase activity. This is Mlc titration factor A from Escherichia fergusonii (strain ATCC 35469 / DSM 13698 / CCUG 18766 / IAM 14443 / JCM 21226 / LMG 7866 / NBRC 102419 / NCTC 12128 / CDC 0568-73).